Reading from the N-terminus, the 143-residue chain is ATP synthase subunit b' (143 aa).

A helical transmembrane segment spans residues 6–26; the sequence is ATLPLMALQFVLLAIILNAIF.

Belongs to the ATPase B chain family. F-type ATPases have 2 components, F(1) - the catalytic core - and F(0) - the membrane proton channel. F(1) has five subunits: alpha(3), beta(3), gamma(1), delta(1), epsilon(1). F(0) has four main subunits: a(1), b(1), b'(1) and c(10-14). The alpha and beta chains form an alternating ring which encloses part of the gamma chain. F(1) is attached to F(0) by a central stalk formed by the gamma and epsilon chains, while a peripheral stalk is formed by the delta, b and b' chains.

It localises to the cellular thylakoid membrane. Functionally, f(1)F(0) ATP synthase produces ATP from ADP in the presence of a proton or sodium gradient. F-type ATPases consist of two structural domains, F(1) containing the extramembraneous catalytic core and F(0) containing the membrane proton channel, linked together by a central stalk and a peripheral stalk. During catalysis, ATP synthesis in the catalytic domain of F(1) is coupled via a rotary mechanism of the central stalk subunits to proton translocation. In terms of biological role, component of the F(0) channel, it forms part of the peripheral stalk, linking F(1) to F(0). The b'-subunit is a diverged and duplicated form of b found in plants and photosynthetic bacteria. The chain is ATP synthase subunit b' from Crocosphaera subtropica (strain ATCC 51142 / BH68) (Cyanothece sp. (strain ATCC 51142)).